A 280-amino-acid chain; its full sequence is Protein YIP4b (280 aa).

Polar residues predominate over residues 1-15 (MSHNDTIPLYQSSQS). Positions 1 to 106 (MSHNDTIPLY…SGFGSPPNTL (106 aa)) are disordered. The Cytoplasmic portion of the chain corresponds to 1–146 (MSHNDTIPLY…DPGKALRDWD (146 aa)). A helical transmembrane segment spans residues 147–167 (LWGPFFFIVFLGLTLSWSASV). Topologically, residues 168–171 (KKSE) are lumenal. The next 2 helical transmembrane spans lie at 172 to 192 (VFAVAFALLAAGAVILTLNVL) and 193 to 213 (LLGGHIIFFQSLSLLGYCLFP). Residues 214–230 (LDVGAVICMLKDNVILK) lie on the Lumenal side of the membrane. The helical transmembrane segment at 231–251 (MVVVSVTLAWSSWAAYPFMSA) threads the bilayer. The Cytoplasmic segment spans residues 252 to 258 (AVNPRRK). Residues 259–279 (ALALYPVFLMYVSVGFLIIAI) form a helical membrane-spanning segment. Asparagine 280 is a topological domain (lumenal).

The protein belongs to the YIP1 family. Homodimer and heterodimer with YIP4A. Component of a trans-Golgi network (TGN)-localized ECH/YIP4 complex made of ECH, YIP4A and YIP4B. Interacts directly with ECH. In terms of tissue distribution, expressed in developing root hair cells.

Its subcellular location is the golgi apparatus. It is found in the trans-Golgi network membrane. Its function is as follows. Together with YIP4A, involved in the regulation of cell elongation during root and hypocotyl growth. YIP4A and YIP4B are central trafficking components in Rho-of-plant (ROPs, e.g. ARAC4/ROP2, ARAC5/ROP4 and ARAC3/ROP6) small GTPases-dependent root hair formation, thus contributing to activation and plasma membrane accumulation of ROPs during hair initiation. The ECH/YIP4 complex is involved in the modulation of the trans-Golgi network (TGN)-mediated trafficking of some proteins and cell wall components (e.g. pectin and hemicellulose) to the cell wall in dark-grown hypocotyls and in secretory cells of the seed coat. The polypeptide is Protein YIP4b (Arabidopsis thaliana (Mouse-ear cress)).